A 344-amino-acid chain; its full sequence is Thioredoxin reductase FGSG_00043 (344 aa).

Residues 12-15 (GGPA), 34-39 (DSVSYR), histidine 51, and alanine 121 each bind FAD. An intrachain disulfide couples cysteine 165 to cysteine 168. FAD-binding positions include aspartate 314 and 321 to 322 (FV).

This sequence belongs to the class-II pyridine nucleotide-disulfide oxidoreductase family. As to quaternary structure, homodimer. It depends on FAD as a cofactor.

The protein operates within mycotoxin biosynthesis. Its function is as follows. Thioredoxin reductase; part of the gene cluster that mediates the biosynthesis of gramillins A and B, bicyclic lipopeptides that induce cell death in maize leaves but not in wheat leaves. The nonribosomal peptide synthetase GRA1 incorporates respectively a glutamic adic (Glu), a leucine (Leu), a serine (Ser), a hydroxyglutamine (HOGln), a 2-amino decanoic acid, and 2 cysteins (CysB and CysA). The biosynthesis of 2-amino decanoic acid incorporated in gramillins could be initiated by a fatty acid synthase composed of the alpha and beta subunits FGSG_00036 and FGSG_11656. The cytochrome P450 monooxygenase FGSG_15680 could hydroxylate the fatty acid chain. Subsequent oxidation to the ketone by the oxidoreductase FGSG_00048 and transamination by aminotransferase FGSG_00049 could form 2-amino-decanoic acid. On the other hand, FGSG_15680 could also be responsible for the HO-modified glutamine at the gamma-position. Whether hydroxylation occurs on the fully assembled product or on the Gln residue prior to assembly into the gramillins requires further proof. The thioredoxin FGSG_00043 could also be required for the disulfide-bond formation between CysA and CysB. The specific involvement of the remaining proteins from the cluster is more difficult to discern, but could have broader regulatory (FGSG_00040 and FGSG_11657) or enzymatic functions (FGSG_00044 and FGSG_00045). The final C-domain of GRA1 does not possess the expected sequence of a termination CT domain, often implicated in macrocyclization and release of a cyclopeptidein fungal NRPs; and the thioesterase FGSG_00047 may act in concert with the terminal C-domain of GRA1 to catalyze the formation of the macrocyclic anhydride and release of the products. In Gibberella zeae (strain ATCC MYA-4620 / CBS 123657 / FGSC 9075 / NRRL 31084 / PH-1) (Wheat head blight fungus), this protein is Thioredoxin reductase FGSG_00043.